A 907-amino-acid polypeptide reads, in one-letter code: Alanine--tRNA ligase (907 aa).

Residues H602, H606, C706, and H710 each coordinate Zn(2+).

This sequence belongs to the class-II aminoacyl-tRNA synthetase family. Requires Zn(2+) as cofactor.

The protein localises to the cytoplasm. It carries out the reaction tRNA(Ala) + L-alanine + ATP = L-alanyl-tRNA(Ala) + AMP + diphosphate. Its function is as follows. Catalyzes the attachment of alanine to tRNA(Ala) in a two-step reaction: alanine is first activated by ATP to form Ala-AMP and then transferred to the acceptor end of tRNA(Ala). Also edits incorrectly charged Ser-tRNA(Ala) and Gly-tRNA(Ala) via its editing domain. This chain is Alanine--tRNA ligase, found in Thermofilum pendens (strain DSM 2475 / Hrk 5).